The chain runs to 191 residues: Protein Ves (191 aa).

It belongs to the Ves family.

This chain is Protein Ves, found in Shigella flexneri.